A 449-amino-acid polypeptide reads, in one-letter code: Tubulin alpha-1 chain (449 aa).

Q11, E71, S140, G144, T145, T179, N206, and N228 together coordinate GTP. Residue E71 coordinates Mg(2+). E254 is an active-site residue.

This sequence belongs to the tubulin family. In terms of assembly, dimer of alpha and beta chains. A typical microtubule is a hollow water-filled tube with an outer diameter of 25 nm and an inner diameter of 15 nM. Alpha-beta heterodimers associate head-to-tail to form protofilaments running lengthwise along the microtubule wall with the beta-tubulin subunit facing the microtubule plus end conferring a structural polarity. Microtubules usually have 13 protofilaments but different protofilament numbers can be found in some organisms and specialized cells. The cofactor is Mg(2+).

The protein localises to the cytoplasm. The protein resides in the cytoskeleton. The enzyme catalyses GTP + H2O = GDP + phosphate + H(+). Functionally, tubulin is the major constituent of microtubules, a cylinder consisting of laterally associated linear protofilaments composed of alpha- and beta-tubulin heterodimers. Microtubules grow by the addition of GTP-tubulin dimers to the microtubule end, where a stabilizing cap forms. Below the cap, tubulin dimers are in GDP-bound state, owing to GTPase activity of alpha-tubulin. In Emericella nidulans (strain FGSC A4 / ATCC 38163 / CBS 112.46 / NRRL 194 / M139) (Aspergillus nidulans), this protein is Tubulin alpha-1 chain (tubA).